A 177-amino-acid chain; its full sequence is Large ribosomal subunit protein uL6 (177 aa).

This sequence belongs to the universal ribosomal protein uL6 family. As to quaternary structure, part of the 50S ribosomal subunit.

Its function is as follows. This protein binds to the 23S rRNA, and is important in its secondary structure. It is located near the subunit interface in the base of the L7/L12 stalk, and near the tRNA binding site of the peptidyltransferase center. The protein is Large ribosomal subunit protein uL6 of Chromobacterium violaceum (strain ATCC 12472 / DSM 30191 / JCM 1249 / CCUG 213 / NBRC 12614 / NCIMB 9131 / NCTC 9757 / MK).